Consider the following 464-residue polypeptide: Cell division protein FtsA (464 aa).

The interval 392 to 464 (EVIETDKDTE…FKKLMKSLFE (73 aa)) is disordered. Residues 416–455 (KKENDEVAPEAPREESYEDRENHLEDEQQTEGKAKEESKF) show a composition bias toward basic and acidic residues.

This sequence belongs to the FtsA/MreB family. As to quaternary structure, self-interacts. Interacts with FtsZ.

It is found in the cell membrane. Functionally, cell division protein that is involved in the assembly of the Z ring. May serve as a membrane anchor for the Z ring. This Staphylococcus epidermidis (strain ATCC 12228 / FDA PCI 1200) protein is Cell division protein FtsA.